The sequence spans 85 residues: Putative membrane protein insertion efficiency factor (85 aa).

The segment at 62 to 85 is disordered; sequence PLGSDGYDPVPEPKDRKPPHSPAG.

Belongs to the UPF0161 family.

The protein resides in the cell inner membrane. Functionally, could be involved in insertion of integral membrane proteins into the membrane. The protein is Putative membrane protein insertion efficiency factor of Ruegeria pomeroyi (strain ATCC 700808 / DSM 15171 / DSS-3) (Silicibacter pomeroyi).